We begin with the raw amino-acid sequence, 447 residues long: GTPase Der (447 aa).

EngA-type G domains are found at residues 4 to 165 (QIIT…PEEE) and 180 to 357 (LQIV…KIWN). GTP contacts are provided by residues 10–17 (GRPNVGKS), 57–61 (DTPGL), 119–122 (NKCE), 186–193 (GRPNAGKS), 233–237 (DTAGL), and 298–301 (NKWD). Residues 358–443 (KKITTSKLNE…PIRFTYVKTK (86 aa)) enclose the KH-like domain.

It belongs to the TRAFAC class TrmE-Era-EngA-EngB-Septin-like GTPase superfamily. EngA (Der) GTPase family. Associates with the 50S ribosomal subunit.

In terms of biological role, GTPase that plays an essential role in the late steps of ribosome biogenesis. The chain is GTPase Der from Rickettsia rickettsii (strain Iowa).